Consider the following 240-residue polypeptide: Protein OXIDATIVE STRESS 3 LIKE 4 (240 aa).

Residues 1–128 (MELMAKPTFS…SKSFGNLGEI (128 aa)) form a disordered region. The span at 51-66 (WSGQTADYSSDSSSIG) shows a compositional bias: polar residues. The span at 70-84 (DSEEDEEESENENDD) shows a compositional bias: acidic residues. A Nuclear localization signal motif is present at residues 142–150 (NKRRRLQIC). The disordered stretch occupies residues 163-207 (NPKSMPLLPVNEDEDDDDEDDDEEDLKSGFDENKSSSDEEGVKKV). The span at 173-187 (NEDEDDDDEDDDEED) shows a compositional bias: acidic residues. Over residues 188–205 (LKSGFDENKSSSDEEGVK) the composition is skewed to basic and acidic residues. Residues 202–229 (EGVKKVVVRKGSFKNRAYKSRSCFALSD) form a kinase-inducible domain (KID) region. Serine 213 bears the Phosphoserine mark.

As to quaternary structure, interacts with HDA19; Ser-213 is critical for this interaction.

The protein localises to the nucleus. Transcription activator which may regulates gene expression through interaction with the histone deacetylase HDA19. Promotes slightly the tolerance to cadmium (Cd) and to oxidizing chemicals (e.g. diamide and tert-butyl hydroperoxide (t-BOOH)). In Arabidopsis thaliana (Mouse-ear cress), this protein is Protein OXIDATIVE STRESS 3 LIKE 4.